Here is a 495-residue protein sequence, read N- to C-terminus: Glycerol kinase (495 aa).

T11 is an ADP binding site. Residues T11, T12, and S13 each contribute to the ATP site. T11 is a sn-glycerol 3-phosphate binding site. An ADP-binding site is contributed by R15. Residues R81, E82, Y133, and D242 each contribute to the sn-glycerol 3-phosphate site. Residues R81, E82, Y133, D242, and Q243 each coordinate glycerol. The ADP site is built by T264 and G307. The ATP site is built by T264, G307, Q311, and G408. The ADP site is built by G408 and N412.

It belongs to the FGGY kinase family.

The enzyme catalyses glycerol + ATP = sn-glycerol 3-phosphate + ADP + H(+). Its pathway is polyol metabolism; glycerol degradation via glycerol kinase pathway; sn-glycerol 3-phosphate from glycerol: step 1/1. Inhibited by fructose 1,6-bisphosphate (FBP). Its function is as follows. Key enzyme in the regulation of glycerol uptake and metabolism. Catalyzes the phosphorylation of glycerol to yield sn-glycerol 3-phosphate. This is Glycerol kinase from Alkalilimnicola ehrlichii (strain ATCC BAA-1101 / DSM 17681 / MLHE-1).